We begin with the raw amino-acid sequence, 158 residues long: 6,7-dimethyl-8-ribityllumazine synthase (158 aa).

5-amino-6-(D-ribitylamino)uracil is bound by residues Phe24, 62-64, and 86-88; these read CFE and AVI. Residue 91–92 coordinates (2S)-2-hydroxy-3-oxobutyl phosphate; it reads DT. The active-site Proton donor is His94. Phe119 serves as a coordination point for 5-amino-6-(D-ribitylamino)uracil. Residue Arg133 participates in (2S)-2-hydroxy-3-oxobutyl phosphate binding.

It belongs to the DMRL synthase family.

The enzyme catalyses (2S)-2-hydroxy-3-oxobutyl phosphate + 5-amino-6-(D-ribitylamino)uracil = 6,7-dimethyl-8-(1-D-ribityl)lumazine + phosphate + 2 H2O + H(+). Its pathway is cofactor biosynthesis; riboflavin biosynthesis; riboflavin from 2-hydroxy-3-oxobutyl phosphate and 5-amino-6-(D-ribitylamino)uracil: step 1/2. In terms of biological role, catalyzes the formation of 6,7-dimethyl-8-ribityllumazine by condensation of 5-amino-6-(D-ribitylamino)uracil with 3,4-dihydroxy-2-butanone 4-phosphate. This is the penultimate step in the biosynthesis of riboflavin. This chain is 6,7-dimethyl-8-ribityllumazine synthase, found in Picosynechococcus sp. (strain ATCC 27264 / PCC 7002 / PR-6) (Agmenellum quadruplicatum).